Reading from the N-terminus, the 397-residue chain is Serine/threonine-protein kinase 17A (397 aa).

Residues M1 to G23 are disordered. S9 bears the Phosphoserine mark. The region spanning L44–L304 is the Protein kinase domain. ATP is bound by residues L50 to V58 and K73. Residue D169 is the Proton acceptor of the active site.

This sequence belongs to the protein kinase superfamily. CAMK Ser/Thr protein kinase family. DAP kinase subfamily. Post-translationally, autophosphorylated. As to expression, highly expressed in bone marrow. Lower levels in brain, heart, lung, liver and kidney.

It localises to the nucleus. It catalyses the reaction L-seryl-[protein] + ATP = O-phospho-L-seryl-[protein] + ADP + H(+). It carries out the reaction L-threonyl-[protein] + ATP = O-phospho-L-threonyl-[protein] + ADP + H(+). With respect to regulation, inhibited by thiazolidinedione-type compounds: inhibited by furan- and pyridone- thiazolidinediones. Its function is as follows. Acts as a positive regulator of apoptosis. May also act as a regulator of cellular reactive oxygen species. The protein is Serine/threonine-protein kinase 17A (STK17A) of Oryctolagus cuniculus (Rabbit).